A 102-amino-acid chain; its full sequence is Large ribosomal subunit protein bL21 (102 aa).

The protein belongs to the bacterial ribosomal protein bL21 family. In terms of assembly, part of the 50S ribosomal subunit. Contacts protein L20.

In terms of biological role, this protein binds to 23S rRNA in the presence of protein L20. This is Large ribosomal subunit protein bL21 from Pediococcus pentosaceus (strain ATCC 25745 / CCUG 21536 / LMG 10740 / 183-1w).